Here is a 512-residue protein sequence, read N- to C-terminus: Maturase K (512 aa).

This sequence belongs to the intron maturase 2 family. MatK subfamily.

It is found in the plastid. The protein localises to the chloroplast. Functionally, usually encoded in the trnK tRNA gene intron. Probably assists in splicing its own and other chloroplast group II introns. In Oenothera argillicola (Appalachian evening primrose), this protein is Maturase K.